The following is a 266-amino-acid chain: 3-methyl-2-oxobutanoate hydroxymethyltransferase 2 (266 aa).

Residues Asp-45 and Asp-84 each contribute to the Mg(2+) site. 3-methyl-2-oxobutanoate contacts are provided by residues Asp-45–Ser-46, Asp-84, and Lys-112. Glu-114 is a Mg(2+) binding site. Residue Glu-181 is the Proton acceptor of the active site.

The protein belongs to the PanB family. As to quaternary structure, homodecamer; pentamer of dimers. Requires Mg(2+) as cofactor.

It is found in the cytoplasm. The enzyme catalyses 3-methyl-2-oxobutanoate + (6R)-5,10-methylene-5,6,7,8-tetrahydrofolate + H2O = 2-dehydropantoate + (6S)-5,6,7,8-tetrahydrofolate. The protein operates within cofactor biosynthesis; (R)-pantothenate biosynthesis; (R)-pantoate from 3-methyl-2-oxobutanoate: step 1/2. In terms of biological role, catalyzes the reversible reaction in which hydroxymethyl group from 5,10-methylenetetrahydrofolate is transferred onto alpha-ketoisovalerate to form ketopantoate. This chain is 3-methyl-2-oxobutanoate hydroxymethyltransferase 2, found in Pseudomonas aeruginosa (strain UCBPP-PA14).